We begin with the raw amino-acid sequence, 61 residues long: UPF0434 protein PSEEN1604 (61 aa).

It belongs to the UPF0434 family.

This chain is UPF0434 protein PSEEN1604, found in Pseudomonas entomophila (strain L48).